The sequence spans 194 residues: Translation machinery-associated protein 22 (194 aa).

The SUI1 domain maps to 102 to 173 (VQIKRVERNK…DVQDWLLEVY (72 aa)).

This sequence belongs to the DENR family. As to quaternary structure, interacts with the 40S ribosomal subunit.

It is found in the cytoplasm. The polypeptide is Translation machinery-associated protein 22 (tma22) (Aspergillus oryzae (strain ATCC 42149 / RIB 40) (Yellow koji mold)).